Consider the following 366-residue polypeptide: UPF0329 protein ECU01_0130/ECU01_1480/ECU08_0060 (366 aa).

Positions 325–366 (IRKEEKRIRKEEERAKNEEELLRMVESEEGKSGEGEEGCRRG) are disordered.

The protein belongs to the UPF0329 family.

The polypeptide is UPF0329 protein ECU01_0130/ECU01_1480/ECU08_0060 (Encephalitozoon cuniculi (strain GB-M1) (Microsporidian parasite)).